The primary structure comprises 169 residues: Interleukin-2 (169 aa).

Positions 1–20 are cleaved as a signal peptide; the sequence is MYSMQLASCVTLTLVLLVNS. O-linked (GalNAc...) threonine glycosylation is present at threonine 23. Cysteine 92 and cysteine 140 are disulfide-bonded.

This sequence belongs to the IL-2 family. In terms of tissue distribution, produced by immune cells including dendritic cells. In contrast, macrophages do not produce IL2 upon bacterial stimulation.

Its subcellular location is the secreted. Cytokine produced by activated CD4-positive helper T-cells and to a lesser extend activated CD8-positive T-cells and natural killer (NK) cells that plays pivotal roles in the immune response and tolerance. Binds to a receptor complex composed of either the high-affinity trimeric IL-2R (IL2RA/CD25, IL2RB/CD122 and IL2RG/CD132) or the low-affinity dimeric IL-2R (IL2RB and IL2RG). Interaction with the receptor leads to oligomerization and conformation changes in the IL-2R subunits resulting in downstream signaling starting with phosphorylation of JAK1 and JAK3. In turn, JAK1 and JAK3 phosphorylate the receptor to form a docking site leading to the phosphorylation of several substrates including STAT5. This process leads to activation of several pathways including STAT, phosphoinositide-3-kinase/PI3K and mitogen-activated protein kinase/MAPK pathways. Functions as a T-cell growth factor and can increase NK-cell cytolytic activity as well. Promotes strong proliferation of activated B-cells and subsequently immunoglobulin production. Plays a pivotal role in regulating the adaptive immune system by controlling the survival and proliferation of regulatory T-cells, which are required for the maintenance of immune tolerance. Moreover, participates in the differentiation and homeostasis of effector T-cell subsets, including Th1, Th2, Th17 as well as memory CD8-positive T-cells. In Mus musculus (Mouse), this protein is Interleukin-2 (Il2).